The chain runs to 416 residues: Tyrosine--tRNA ligase (416 aa).

Y34 is an L-tyrosine binding site. The short motif at 39 to 48 (PTGDSLHIGH) is the 'HIGH' region element. Residues Y165 and Q169 each contribute to the L-tyrosine site. The 'KMSKS' region motif lies at 227-231 (KFGKT). Residue K230 participates in ATP binding. The region spanning 349-416 (ENIIIWLTDN…KKHYYLARVK (68 aa)) is the S4 RNA-binding domain.

The protein belongs to the class-I aminoacyl-tRNA synthetase family. TyrS type 1 subfamily. Homodimer.

The protein localises to the cytoplasm. It carries out the reaction tRNA(Tyr) + L-tyrosine + ATP = L-tyrosyl-tRNA(Tyr) + AMP + diphosphate + H(+). Catalyzes the attachment of tyrosine to tRNA(Tyr) in a two-step reaction: tyrosine is first activated by ATP to form Tyr-AMP and then transferred to the acceptor end of tRNA(Tyr). In Limosilactobacillus reuteri (strain DSM 20016) (Lactobacillus reuteri), this protein is Tyrosine--tRNA ligase.